The following is a 654-amino-acid chain: tRNA uridine 5-carboxymethylaminomethyl modification enzyme MnmG (654 aa).

17–22 (GGGHAG) provides a ligand contact to FAD. NAD(+) is bound at residue 289-303 (GPRYCPSIEDKIVKF).

The protein belongs to the MnmG family. Homodimer. Heterotetramer of two MnmE and two MnmG subunits. FAD serves as cofactor.

Its subcellular location is the cytoplasm. Functionally, NAD-binding protein involved in the addition of a carboxymethylaminomethyl (cmnm) group at the wobble position (U34) of certain tRNAs, forming tRNA-cmnm(5)s(2)U34. The chain is tRNA uridine 5-carboxymethylaminomethyl modification enzyme MnmG from Prochlorococcus marinus subsp. pastoris (strain CCMP1986 / NIES-2087 / MED4).